The sequence spans 226 residues: RNA annealing protein YRA1 (226 aa).

The tract at residues 1–62 is disordered; sequence MSANLDKSLD…PIRKNTRAPP (62 aa). An N-acetylserine modification is found at serine 2. Phosphoserine occurs at positions 8 and 100. Positions 78 to 158 constitute an RRM domain; sequence VKVNVEGLPR…SRLRLNLIVD (81 aa). The interval 173-226 is disordered; the sequence is AMPQKGGNAPRPVKRGPNRKAAMAKSQNKPKREKPAKKSLEDLDKEMADYFEKK. Residues 208 to 226 show a composition bias toward basic and acidic residues; it reads AKKSLEDLDKEMADYFEKK.

In terms of assembly, component of the transcription/export (TREX) complex, which is at least is formed of SUB2, TEX1 and YRA1 and the THO complex composed of HPR1, MFT1, THO2 and THP1. Interacts with RDS3 and YRA2.

The protein localises to the nucleus. In terms of biological role, RNA-binding RNA annealing protein. May have a role in pre-mRNA metabolism. Component the TREX complex, which operates in coupling transcription elongation to mRNA export. The chain is RNA annealing protein YRA1 (YRA1) from Saccharomyces cerevisiae (strain ATCC 204508 / S288c) (Baker's yeast).